A 238-amino-acid chain; its full sequence is uncharacterized protein (238 aa).

This is an uncharacterized protein from Acheta domesticus (House cricket).